The following is a 206-amino-acid chain: Thymidylate kinase (206 aa).

10 to 17 (GIDGAGKS) is an ATP binding site.

This sequence belongs to the thymidylate kinase family.

It catalyses the reaction dTMP + ATP = dTDP + ADP. Phosphorylation of dTMP to form dTDP in both de novo and salvage pathways of dTTP synthesis. The chain is Thymidylate kinase (tmk) from Neisseria meningitidis serogroup A / serotype 4A (strain DSM 15465 / Z2491).